The following is a 324-amino-acid chain: NAC domain-containing protein 21/22 (324 aa).

The NAC domain maps to Leu19–Lys171. The Bipartite nuclear localization signal signature appears at Arg120–Asp137.

In terms of assembly, dimer. Interacts with SINAT5. Ubiquitinated. The interaction with SINAT5 mediate its proteasome-dependent degradation. In terms of tissue distribution, predominantly expressed in the root tip and in lateral root initiation sites. Also detected in expanding cotyledon, and in leaf primordia.

Its subcellular location is the nucleus. In terms of biological role, transcriptional activator that mediates auxin signaling to promote lateral root development. Activates the expression of two downstream auxin-responsive genes, DBP and AIR3. In Arabidopsis thaliana (Mouse-ear cress), this protein is NAC domain-containing protein 21/22 (NAC021).